The sequence spans 200 residues: Large ribosomal subunit protein uL4 (200 aa).

The tract at residues 38–68 (GRQGSKQQKTRSDVRGGGKRPWRQKGTGRAR) is disordered. Residues 54-65 (GGKRPWRQKGTG) show a composition bias toward basic residues.

It belongs to the universal ribosomal protein uL4 family. Part of the 50S ribosomal subunit.

Functionally, one of the primary rRNA binding proteins, this protein initially binds near the 5'-end of the 23S rRNA. It is important during the early stages of 50S assembly. It makes multiple contacts with different domains of the 23S rRNA in the assembled 50S subunit and ribosome. Its function is as follows. Forms part of the polypeptide exit tunnel. This Pseudomonas savastanoi pv. phaseolicola (strain 1448A / Race 6) (Pseudomonas syringae pv. phaseolicola (strain 1448A / Race 6)) protein is Large ribosomal subunit protein uL4.